The sequence spans 268 residues: Taurine import ATP-binding protein TauB (268 aa).

In terms of domain architecture, ABC transporter spans 4-236 (LSINNLSMRF…LGVDSDLREV (233 aa)). 41-48 (GPSGCGKT) serves as a coordination point for ATP.

Belongs to the ABC transporter superfamily. Taurine importer (TC 3.A.1.17.1) family. In terms of assembly, the complex is composed of two ATP-binding proteins (TauB), two transmembrane proteins (TauC) and a solute-binding protein (TauA).

The protein resides in the cell inner membrane. The enzyme catalyses taurine(out) + ATP + H2O = taurine(in) + ADP + phosphate + H(+). Its function is as follows. Part of the ABC transporter complex TauABC involved in taurine import. Responsible for energy coupling to the transport system. This Roseobacter denitrificans (strain ATCC 33942 / OCh 114) (Erythrobacter sp. (strain OCh 114)) protein is Taurine import ATP-binding protein TauB.